Here is a 227-residue protein sequence, read N- to C-terminus: Potassium/proton antiporter CemA (227 aa).

The next 4 helical transmembrane spans lie at 5–25, 112–132, 143–163, and 187–207; these read SISLLYLISIVFLPWCISFTF, IICFFILSGYSILGNQELILI, LSDTIKAFSILLLTDLCIGFH, and IISGLVSTFPVILDTIFKYWI.

It belongs to the CemA family.

Its subcellular location is the plastid. It is found in the chloroplast inner membrane. It carries out the reaction K(+)(in) + H(+)(out) = K(+)(out) + H(+)(in). Functionally, contributes to K(+)/H(+) antiport activity by supporting proton efflux to control proton extrusion and homeostasis in chloroplasts in a light-dependent manner to modulate photosynthesis. Prevents excessive induction of non-photochemical quenching (NPQ) under continuous-light conditions. Indirectly promotes efficient inorganic carbon uptake into chloroplasts. The chain is Potassium/proton antiporter CemA from Phaseolus vulgaris (Kidney bean).